Reading from the N-terminus, the 43-residue chain is Defensin-A (43 aa).

Cystine bridges form between Cys3/Cys34, Cys20/Cys39, and Cys24/Cys41.

It is found in the secreted. Antibacterial protein. Strong activity against the Gram-positive bacteria M.luteus, B.megaterium and S.aureus. Reduced activity against Gram-positive bacterium B.subtilis and weak activity against Gram-negative bacterium X.japonicus. No detectable activity against the Gram-negative bacteria E.asbriae, E.coli, P.aeruginosa and S.marcescens. This Anomala cuprea (Cupreous chafer beetle) protein is Defensin-A.